The following is a 476-amino-acid chain: G-patch domain and KOW motifs-containing protein (476 aa).

The interval 1-96 (MADSKEGVLP…PGPSTDTGAL (96 aa)) is disordered. The residue at position 2 (Ala2) is an N-acetylalanine. Residue Lys5 forms a Glycyl lysine isopeptide (Lys-Gly) (interchain with G-Cter in SUMO2) linkage. The segment covering 13–26 (AASTAPISFGFTRT) has biased composition (polar residues). Ser27 is modified (phosphoserine; by PKA). 2 positions are modified to phosphoserine: Ser35 and Ser42. Positions 43–58 (PEEKDFLKTVEGRELQ) are enriched in basic and acidic residues. Ser115 bears the Phosphoserine mark. In terms of domain architecture, G-patch spans 164–210 (VEAYGLAMLRGMGWKPGEGIGRTFNQVVKPRVNSLRPKGLGLGANLT). The interval 203–244 (LGLGANLTEAQALTPTGPSRMPRPDEEQEKDKEDQPQGLVPG) is disordered. The span at 210–219 (TEAQALTPTG) shows a compositional bias: polar residues. Thr216 carries the post-translational modification Phosphothreonine. The span at 224–237 (PRPDEEQEKDKEDQ) shows a compositional bias: basic and acidic residues. Positions 240 to 267 (GLVPGGAVVVLSGPHRGLYGKVEGLDPD) constitute a KOW 1 domain. The residue at position 316 (Thr316) is a Phosphothreonine; by PKA. The interval 327–353 (DNSERKRKHLPDRQDGPAAKSEKAAPR) is disordered. Residues 337–351 (PDRQDGPAAKSEKAA) are compositionally biased toward basic and acidic residues. In terms of domain architecture, KOW 2 spans 415 to 442 (PKAEGDRVMVVLGPQTGRVGHLLSRDRA). A Phosphoserine modification is found at Ser471. Phosphothreonine is present on Thr473.

Belongs to the MOS2 family. In terms of assembly, component of the minor spliceosome, which splices U12-type introns. Interacts with PRKX. Interacts with DHX16. Interacts with PRKACB. Phosphorylation regulates its ability to bind RNA.

The protein localises to the nucleus. In terms of biological role, RNA-binding protein involved in pre-mRNA splicing. As a component of the minor spliceosome, involved in the splicing of U12-type introns in pre-mRNAs. This is G-patch domain and KOW motifs-containing protein (GPKOW) from Homo sapiens (Human).